A 517-amino-acid polypeptide reads, in one-letter code: Serine hydroxymethyltransferase 1, mitochondrial (517 aa).

A mitochondrion-targeting transit peptide spans 1 to 31; the sequence is MAMALALRRLSSSADKPLQRLFNGGHLYSMS. K287 is modified (N6-(pyridoxal phosphate)lysine).

This sequence belongs to the SHMT family. Homotetramer. Requires pyridoxal 5'-phosphate as cofactor.

The protein resides in the mitochondrion. The catalysed reaction is (6R)-5,10-methylene-5,6,7,8-tetrahydrofolate + glycine + H2O = (6S)-5,6,7,8-tetrahydrofolate + L-serine. Its pathway is one-carbon metabolism; tetrahydrofolate interconversion. Functionally, catalyzes the interconversion of serine and glycine. This Flaveria pringlei protein is Serine hydroxymethyltransferase 1, mitochondrial.